Reading from the N-terminus, the 145-residue chain is Large ribosomal subunit protein uL11 (145 aa).

Belongs to the universal ribosomal protein uL11 family. In terms of assembly, part of the ribosomal stalk of the 50S ribosomal subunit. Interacts with L10 and the large rRNA to form the base of the stalk. L10 forms an elongated spine to which L12 dimers bind in a sequential fashion forming a multimeric L10(L12)X complex. Post-translationally, one or more lysine residues are methylated.

Forms part of the ribosomal stalk which helps the ribosome interact with GTP-bound translation factors. In Porphyromonas gingivalis (strain ATCC 33277 / DSM 20709 / CIP 103683 / JCM 12257 / NCTC 11834 / 2561), this protein is Large ribosomal subunit protein uL11.